The sequence spans 378 residues: Quinolinate synthase (378 aa).

Iminosuccinate contacts are provided by H59 and S80. C125 provides a ligand contact to [4Fe-4S] cluster. Residues 151–153 (YAN) and S168 contribute to the iminosuccinate site. C212 is a [4Fe-4S] cluster binding site. Residues 238–240 (HPE) and T255 contribute to the iminosuccinate site. C309 lines the [4Fe-4S] cluster pocket.

The protein belongs to the quinolinate synthase family. Type 1 subfamily. [4Fe-4S] cluster is required as a cofactor.

The protein resides in the cytoplasm. The catalysed reaction is iminosuccinate + dihydroxyacetone phosphate = quinolinate + phosphate + 2 H2O + H(+). Its pathway is cofactor biosynthesis; NAD(+) biosynthesis; quinolinate from iminoaspartate: step 1/1. In terms of biological role, catalyzes the condensation of iminoaspartate with dihydroxyacetone phosphate to form quinolinate. The polypeptide is Quinolinate synthase (Burkholderia lata (strain ATCC 17760 / DSM 23089 / LMG 22485 / NCIMB 9086 / R18194 / 383)).